Consider the following 242-residue polypeptide: N-alpha-acetyltransferase 60 (242 aa).

The Cytoplasmic portion of the chain corresponds to 1 to 192 (MTEVVPSSAL…GGHPPWTILD (192 aa)). One can recognise an N-acetyltransferase domain in the interval 13–182 (VSLRLLCHDD…DGFTYVLYIN (170 aa)). Y38 is a substrate binding site. An N6-acetyllysine; by autocatalysis modification is found at K79. Y97 is an active-site residue. Residue L99 participates in substrate binding. 101-103 (LGV) is an acetyl-CoA binding site. N6-acetyllysine; by autocatalysis occurs at positions 105, 109, and 121. 109–114 (KHGIGS) lines the acetyl-CoA pocket. Residue H138 is part of the active site. Acetyl-CoA is bound by residues N143 and 150–153 (YENR). The tract at residues 162–173 (PYYYSIRGVLKD) is required for homodimerization. Substrate is bound at residue Y165. Positions 193–236 (YIQHLGSALANLSPCSIPHRIYRQAHSLLCSFLPWSSISTKGGI) form an intramembrane region, helical. The Cytoplasmic portion of the chain corresponds to 237-242 (EYSRTM).

The protein belongs to the acetyltransferase family. NAA60 subfamily. Monomer and homodimer; monomer in presence of substrate and homodimer in its absence. In terms of processing, acetylated: autoacetylation is required for optimal acetyltransferase activity.

It localises to the golgi apparatus membrane. The enzyme catalyses N-terminal L-methionyl-[transmembrane protein] + acetyl-CoA = N-terminal N(alpha)-acetyl-L-methionyl-[transmembrane protein] + CoA + H(+). The catalysed reaction is L-lysyl-[protein] + acetyl-CoA = N(6)-acetyl-L-lysyl-[protein] + CoA + H(+). In terms of biological role, N-alpha-acetyltransferase that specifically mediates the acetylation of N-terminal residues of the transmembrane proteins, with a strong preference for N-termini facing the cytosol. Displays N-terminal acetyltransferase activity towards a range of N-terminal sequences including those starting with Met-Lys, Met-Val, Met-Ala and Met-Met. Required for normal chromosomal segregation during anaphase. May also show histone acetyltransferase activity; such results are however unclear in vivo and would require additional experimental evidences. This chain is N-alpha-acetyltransferase 60 (Naa60), found in Mus musculus (Mouse).